The sequence spans 968 residues: Sorting nexin-13 (968 aa).

Residues 97–284 enclose the PXA domain; it reads ANIIDEPLQQ…YVIWMIRDSN (188 aa). The 124-residue stretch at 373–496 folds into the RGS domain; the sequence is PLDSILVDNV…RKVYELMLRD (124 aa). The 122-residue stretch at 570–691 folds into the PX domain; it reads YADYDPYAVA…DFLENKAYSK (122 aa). Arg-612, Ser-614, Lys-639, and Arg-653 together coordinate a 1,2-diacyl-sn-glycero-3-phospho-(1D-myo-inositol-3-phosphate).

The protein belongs to the sorting nexin family.

The protein localises to the early endosome membrane. Its function is as follows. May be involved in several stages of intracellular trafficking. May play a role in endosome homeostasis. Acts as a GAP for Galphas. This chain is Sorting nexin-13 (SNX13), found in Homo sapiens (Human).